Consider the following 707-residue polypeptide: Protein SGM1 (707 aa).

Basic and acidic residues predominate over residues 1 to 11; sequence MSKKLSLEERL. Positions 1-52 are disordered; it reads MSKKLSLEERLSLATKKGRKKNKRSTSNLSSPSPVVLSNNEQESARTSIDDA. Position 2 is an N-acetylserine (Ser-2). Positions 27-40 are enriched in low complexity; sequence SNLSSPSPVVLSNN. A coiled-coil region spans residues 122–473; it reads VEELVKEISP…KPHQENSNEK (352 aa). A phosphoserine mark is found at Ser-151, Ser-538, Ser-549, Ser-568, Ser-571, Ser-576, and Ser-589. Residues 594 to 706 adopt a coiled-coil conformation; the sequence is SAHLVNKLST…QQMVEMQGKM (113 aa).

Belongs to the SGM1 family. As to quaternary structure, interacts with YPT6.

The protein localises to the golgi apparatus. Functionally, required for normal growth rate on galactose and mannose. In Saccharomyces cerevisiae (strain ATCC 204508 / S288c) (Baker's yeast), this protein is Protein SGM1 (SGM1).